We begin with the raw amino-acid sequence, 536 residues long: Pre-mRNA-splicing regulator female-lethal(2)D (536 aa).

The tract at residues 1 to 91 is disordered; sequence MSVAAMTMDD…LQQQQQQQQQ (91 aa). A compositionally biased stretch (low complexity) spans 28 to 39; that stretch reads QNLNILNSSQNS. Basic residues predominate over residues 57–69; sequence HHHHHPHPHHHHH. A compositionally biased stretch (low complexity) spans 72 to 91; the sequence is QQQQQQQQQHLQQQQQQQQQ. Positions 254 to 319 form a coiled coil; it reads KSFSEEVKKS…KQAIKDEVVA (66 aa). Positions 424-450 are disordered; sequence APRTLPPKKSKLRGITTRRNSQLEEDH.

It belongs to the fl(2)d family. Component of the WMM complex, a N6-methyltransferase complex composed of a catalytic subcomplex, named MAC, and of an associated subcomplex, named MACOM. The MAC subcomplex is composed of Ime4/Mettl3 and Mettl14. The MACOM subcomplex is composed of fl(2)d, Flacc/Xio, Hakai, vir, and, in some cases of nito. Interacts with vir and msk. Part of a complex containing fl(2)d, Sxl and vir.

It is found in the nucleus. Associated component of the WMM complex, a complex that mediates N6-methyladenosine (m6A) methylation of mRNAs, a modification that plays a role in the efficiency of mRNA splicing and is required for sex determination. Required for sex determination and dosage compensation via Sxl alternative splicing: m6A methylation acts as a key regulator of Sxl pre-mRNA and promotes female-specific alternative splicing of Sxl, which determines female physiognomy. M6A methylation is also required for neuronal functions. Required for proper inclusion of regulated exons in Ubx transcripts, leading to isoforms Ia/b and IIa/b. The protein is Pre-mRNA-splicing regulator female-lethal(2)D of Drosophila melanogaster (Fruit fly).